A 353-amino-acid chain; its full sequence is uncharacterized protein (353 aa).

The next 9 membrane-spanning stretches (helical) occupy residues 16–36, 77–97, 106–128, 140–160, 167–187, 208–228, 263–283, 296–316, and 323–343; these read AAYIIGFSFLAVSIILGISCG, VVLAALVGAALSIAGAAFQGL, YTLGVSSGASVGAVVTLFLGLHL, SVAAALATMAAVLFFSRLVHA, LILTGVITNSFLGAFISLIIA, GWSYVILFLPFFLLGTILLII, LLTGSAVAVSGTIGFVGLVIP, HLLPLSALLGAGFLVLADLLS, and IELPIGIITSLAGAPVFALIL.

It belongs to the binding-protein-dependent transport system permease family. FecCD subfamily. The complex is composed of two ATP-binding proteins (YvrA), two transmembrane proteins (YvrB) and a solute-binding protein (YvrC).

The protein localises to the cell membrane. Probably part of an ABC transporter complex. Probably responsible for the translocation of the substrate across the membrane. This is an uncharacterized protein from Bacillus subtilis (strain 168).